The sequence spans 156 residues: Small ribosomal subunit protein uS7 (156 aa).

This sequence belongs to the universal ribosomal protein uS7 family. As to quaternary structure, part of the 30S ribosomal subunit. Contacts proteins S9 and S11.

One of the primary rRNA binding proteins, it binds directly to 16S rRNA where it nucleates assembly of the head domain of the 30S subunit. Is located at the subunit interface close to the decoding center, probably blocks exit of the E-site tRNA. This chain is Small ribosomal subunit protein uS7, found in Staphylococcus aureus (strain bovine RF122 / ET3-1).